A 129-amino-acid polypeptide reads, in one-letter code: Trefoil factor 2 (129 aa).

Residues 1–23 (MGPRGAPLLAVVLVLGLHALVEG) form the signal peptide. 2 P-type domains span residues 29-73 (CRCS…FHPL) and 79-122 (EQCV…FFPQ). Intrachain disulfides connect Cys29–Cys127, Cys31–Cys58, Cys42–Cys57, Cys52–Cys69, Cys81–Cys107, Cys91–Cys106, and Cys101–Cys118.

In terms of tissue distribution, stomach and pancreas.

It localises to the secreted. Functionally, inhibits gastrointestinal motility and gastric acid secretion. Could function as a structural component of gastric mucus, possibly by stabilizing glycoproteins in the mucus gel through interactions with carbohydrate side chains. The sequence is that of Trefoil factor 2 (Tff2) from Mus musculus (Mouse).